A 161-amino-acid chain; its full sequence is Phosphopantetheine adenylyltransferase (161 aa).

S10 contacts substrate. ATP-binding positions include 10–11 (SF) and H18. Residues K42, L74, and R88 each coordinate substrate. ATP is bound by residues 88 to 89 (RG), E99, and 124 to 130 (YSFLSSS).

The protein belongs to the bacterial CoaD family. Homohexamer. Requires Mg(2+) as cofactor.

The protein resides in the cytoplasm. It catalyses the reaction (R)-4'-phosphopantetheine + ATP + H(+) = 3'-dephospho-CoA + diphosphate. It participates in cofactor biosynthesis; coenzyme A biosynthesis; CoA from (R)-pantothenate: step 4/5. Functionally, reversibly transfers an adenylyl group from ATP to 4'-phosphopantetheine, yielding dephospho-CoA (dPCoA) and pyrophosphate. The protein is Phosphopantetheine adenylyltransferase of Bacillus subtilis (strain 168).